Reading from the N-terminus, the 772-residue chain is Ribosomal protein S6 kinase alpha-4 (772 aa).

Positions 33–301 (FELLKVLGTG…AQEVRNHPFF (269 aa)) constitute a Protein kinase 1 domain. ATP-binding positions include 39–47 (LGTGAYGKV) and K65. D161 functions as the Proton acceptor in the catalytic mechanism. Residue S196 is modified to Phosphoserine; by autocatalysis. Residues 302–371 (QGLDWVALAA…VAPSILFDHN (70 aa)) form the AGC-kinase C-terminal domain. A Phosphoserine; by MAPK1, MAPK3 and MAPK14 modification is found at S343. S347 is modified (phosphoserine). Residues S360 and S365 each carry the phosphoserine; by autocatalysis modification. One can recognise a Protein kinase 2 domain in the interval 411 to 674 (DLREPALGQG…LEGLRGSSWL (264 aa)). ATP contacts are provided by residues 417-425 (LGQGSFSVC) and K440. Residue D530 is the Proton acceptor of the active site. The residue at position 542 (T542) is a Phosphothreonine. T568 carries the phosphothreonine; by MAPK1, MAPK3 and MAPK14 modification. 2 positions are modified to phosphoserine: S634 and S678. 2 disordered regions span residues 673 to 696 (WLQD…SSGP) and 728 to 772 (AKRR…LPPS). T687 carries the phosphothreonine modification. A required for nuclear targeting and association with MAPK14 region spans residues 725–772 (APLAKRRKQKLRSATASRRGSPAPANPGRAPVASKGAPRRANGPLPPS). A Phosphoserine; by autocatalysis modification is found at S737. At S745 the chain carries Phosphoserine.

Belongs to the protein kinase superfamily. AGC Ser/Thr protein kinase family. S6 kinase subfamily. Forms a complex with either MAPK1/ERK2 or MAPK3/ERK1 in quiescent cells which transiently dissociates following mitogenic stimulation. Also associates with MAPK14/p38-alpha. Activated RPS6KA4 associates with and phosphorylates the NF-kappa-B p65 subunit RELA. It depends on Mg(2+) as a cofactor. Post-translationally, ser-343 and Thr-568 phosphorylation is required for kinase activity. Ser-343 and Ser-196 are autophosphorylated by the C-terminal kinase domain, and their phosphorylation is essential for the catalytic activity of the N-terminal kinase domain. Phosphorylated at Ser-343, Thr-568 and Thr-687 by MAPK1/ERK2, MAPK3/ERK1 and MAPK14/p38-alpha. Autophosphorylated at Ser-737 and Ser-745 by the N-terminal kinase domain.

It is found in the nucleus. The enzyme catalyses L-seryl-[protein] + ATP = O-phospho-L-seryl-[protein] + ADP + H(+). The catalysed reaction is L-threonyl-[protein] + ATP = O-phospho-L-threonyl-[protein] + ADP + H(+). Its activity is regulated as follows. Activated by phosphorylation at Ser-343, Thr-568 and Thr-687 by MAPK1/ERK2, MAPK3/ERK1 and MAPK14/p38-alpha, and by further autophosphorylation of Ser-196, Ser-360 and Ser-365 by the activated C-terminal kinase domain. Serine/threonine-protein kinase that is required for the mitogen or stress-induced phosphorylation of the transcription factors CREB1 and ATF1 and for the regulation of the transcription factor RELA, and that contributes to gene activation by histone phosphorylation and functions in the regulation of inflammatory genes. Phosphorylates CREB1 and ATF1 in response to mitogenic or stress stimuli such as UV-C irradiation, epidermal growth factor (EGF) and anisomycin. Plays an essential role in the control of RELA transcriptional activity in response to TNF. Phosphorylates 'Ser-10' of histone H3 in response to mitogenics, stress stimuli and EGF, which results in the transcriptional activation of several immediate early genes, including proto-oncogenes c-fos/FOS and c-jun/JUN. May also phosphorylate 'Ser-28' of histone H3. Mediates the mitogen- and stress-induced phosphorylation of high mobility group protein 1 (HMGN1/HMG14). In lipopolysaccharide-stimulated primary macrophages, acts downstream of the Toll-like receptor TLR4 to limit the production of pro-inflammatory cytokines. Functions probably by inducing transcription of the MAP kinase phosphatase DUSP1 and the anti-inflammatory cytokine interleukin 10 (IL10), via CREB1 and ATF1 transcription factors. The sequence is that of Ribosomal protein S6 kinase alpha-4 (RPS6KA4) from Homo sapiens (Human).